We begin with the raw amino-acid sequence, 60 residues long: MAVPKRKTSPSRRNMRRSHHALGANSFIEDKDTGELRRPHHVDLKTGMYNGKQILTPKED.

The span at 1-20 (MAVPKRKTSPSRRNMRRSHH) shows a compositional bias: basic residues. The disordered stretch occupies residues 1–60 (MAVPKRKTSPSRRNMRRSHHALGANSFIEDKDTGELRRPHHVDLKTGMYNGKQILTPKED). Residues 28 to 44 (IEDKDTGELRRPHHVDL) show a composition bias toward basic and acidic residues.

This sequence belongs to the bacterial ribosomal protein bL32 family.

This is Large ribosomal subunit protein bL32 from Caulobacter vibrioides (strain ATCC 19089 / CIP 103742 / CB 15) (Caulobacter crescentus).